The chain runs to 435 residues: Membrane-bound ghrelin O-acyltransferase MBOAT4 (435 aa).

The Lumenal segment spans residues 1–5; it reads MDWLQ. A helical membrane pass occupies residues 6–26; the sequence is FFFLHPVSLYQGAAFPFALLF. At 27–40 the chain is on the cytoplasmic side; the sequence is NYLCITESFPTRAR. Residues 41 to 56 traverse the membrane as a helical segment; it reads YLFLLAGGGVLALAAM. At 57-59 the chain is on the lumenal side; it reads GPY. The chain crosses the membrane as a helical span at residues 60–76; the sequence is ALLIFIPALCAVAMISS. The Cytoplasmic portion of the chain corresponds to 77-82; it reads LSPQEV. A helical transmembrane segment spans residues 83-101; sequence HGLTFFFQMGWQTLCHLGL. The Lumenal portion of the chain corresponds to 102–120; the sequence is HYKEYYLCEPPPVRFYITL. A helical transmembrane segment spans residues 121-136; the sequence is SSLMLLTQRVTSLSLD. Residues 137–206 lie on the Cytoplasmic side of the membrane; that stretch reads ISEGKVEAAW…YPSISFWALT (70 aa). The chain crosses the membrane as a helical span at residues 207 to 227; it reads WRGLQILGLECLKVALRRVVS. Residues 228 to 240 are Lumenal-facing; it reads AGAGLDDCQRLEC. Residues 241–261 form a helical membrane-spanning segment; that stretch reads IYIMWSTAGLFKLTYYSHWIL. The Cytoplasmic portion of the chain corresponds to 262 to 324; that stretch reads DDSLLHAAGF…KRLVFQRSRR (63 aa). Catalysis depends on residues asparagine 307 and histidine 338. A helical membrane pass occupies residues 325-338; that stretch reads WPVLQTFAFSAWWH. The Lumenal portion of the chain corresponds to 339 to 340; that stretch reads GL. A helical membrane pass occupies residues 341-357; the sequence is HPGQVFGFLCWSVMVKA. Over 358-376 the chain is Cytoplasmic; the sequence is DYLIHTFANGCIRSWPLRL. Residues 377-397 form a helical membrane-spanning segment; the sequence is LYRSLTWAHTQIIIAYVMLAV. Residues 398–407 lie on the Lumenal side of the membrane; that stretch reads EGRSFSSLCR. Residues 408–428 traverse the membrane as a helical segment; sequence LCCSYNSIFPVTYCLLLFLLA. The Cytoplasmic portion of the chain corresponds to 429-435; it reads RRKHKCN.

The protein belongs to the membrane-bound acyltransferase family. In terms of assembly, monomer. Post-translationally, not glycosylated.

The protein localises to the endoplasmic reticulum membrane. The enzyme catalyses octanoyl-CoA + L-seryl-[protein] = O-octanoyl-L-seryl-[protein] + CoA. The catalysed reaction is decanoyl-CoA + L-seryl-[protein] = O-decanoyl-L-seryl-[protein] + CoA. It catalyses the reaction L-seryl-[protein] + acetyl-CoA = O-acetyl-L-seryl-[protein] + CoA. It carries out the reaction L-seryl-[protein] + butanoyl-CoA = O-butanoyl-L-seryl-[protein] + CoA. The enzyme catalyses pentanoyl-CoA + L-seryl-[protein] = O-pentanoyl-L-seryl-[protein] + CoA. The catalysed reaction is hexanoyl-CoA + L-seryl-[protein] = O-hexanoyl-L-seryl-[protein] + CoA. It catalyses the reaction heptanoyl-CoA + L-seryl-[protein] = O-heptanoyl-L-seryl-[protein] + CoA. It carries out the reaction nonanoyl-CoA + L-seryl-[protein] = O-nonanoyl-L-seryl-[protein] + CoA. The enzyme catalyses L-seryl-[protein] + dodecanoyl-CoA = O-dodecanoyl-L-seryl-[protein] + CoA. The catalysed reaction is L-seryl-[protein] + tetradecanoyl-CoA = O-tetradecanoyl-L-seryl-[protein] + CoA. It catalyses the reaction a fatty acyl-CoA + L-seryl-[protein] = O-fatty acyl-L-seryl-[protein] + CoA. In terms of biological role, catalyzes ghrelin acylation at 'Ser-3' using preferentially octanoyl-CoA, hexanoyl-CoA and decanoyl-CoA as acyl-CoA donors leading to ghrelin activity. In vitro uses also acyl-CoA donors of different lengths from short-chain (C2) to long-chain fatty acids (C16) knowing that acyl-CoA donors from butanoyl-CoA (C4) to dodecanoyl-CoA (C12) are more efficient compared to longer acyl-CoA donors, such as myristoyl-CoA (C14) and palmitoyl-CoA (C16) that are not efficient. The protein is Membrane-bound ghrelin O-acyltransferase MBOAT4 of Rattus norvegicus (Rat).